The primary structure comprises 163 residues: NADH-quinone oxidoreductase subunit I (163 aa).

2 consecutive 4Fe-4S ferredoxin-type domains span residues 54-84 and 94-123; these read LRRY…IESD and TRYD…ETQI. [4Fe-4S] cluster-binding residues include C64, C67, C70, C74, C103, C106, C109, and C113.

This sequence belongs to the complex I 23 kDa subunit family. In terms of assembly, NDH-1 is composed of 14 different subunits. Subunits NuoA, H, J, K, L, M, N constitute the membrane sector of the complex. It depends on [4Fe-4S] cluster as a cofactor.

The protein localises to the cell inner membrane. The enzyme catalyses a quinone + NADH + 5 H(+)(in) = a quinol + NAD(+) + 4 H(+)(out). NDH-1 shuttles electrons from NADH, via FMN and iron-sulfur (Fe-S) centers, to quinones in the respiratory chain. The immediate electron acceptor for the enzyme in this species is believed to be ubiquinone. Couples the redox reaction to proton translocation (for every two electrons transferred, four hydrogen ions are translocated across the cytoplasmic membrane), and thus conserves the redox energy in a proton gradient. This is NADH-quinone oxidoreductase subunit I from Cupriavidus necator (strain ATCC 17699 / DSM 428 / KCTC 22496 / NCIMB 10442 / H16 / Stanier 337) (Ralstonia eutropha).